Consider the following 104-residue polypeptide: MAAKIRRDDEVIVLTGKDKGKRGKVKNVLSSGKVIVEGINLVKKHQKPVPALNQPGGIVEKEAAIQVSNVAIFNATTGKADRVGFRFEDGKKVRFFKSNSETIK.

The protein belongs to the universal ribosomal protein uL24 family. As to quaternary structure, part of the 50S ribosomal subunit.

In terms of biological role, one of two assembly initiator proteins, it binds directly to the 5'-end of the 23S rRNA, where it nucleates assembly of the 50S subunit. Functionally, one of the proteins that surrounds the polypeptide exit tunnel on the outside of the subunit. The polypeptide is Large ribosomal subunit protein uL24 (Escherichia coli O81 (strain ED1a)).